The sequence spans 539 residues: CTP synthase (539 aa).

The amidoligase domain stretch occupies residues 1 to 267 (MKEAKFIFVT…GTQVLEHFHL (267 aa)). S15 is a binding site for CTP. Position 15 (S15) interacts with UTP. Residues 16–21 (SLGKGL) and D73 each bind ATP. Residues D73 and E141 each coordinate Mg(2+). CTP contacts are provided by residues 148 to 150 (DIE), 188 to 193 (KTKPTQ), and K224. Residues 188–193 (KTKPTQ) and K224 each bind UTP. The Glutamine amidotransferase type-1 domain occupies 292–536 (TVSIVGKYTE…IKAVVNKVKK (245 aa)). G359 contributes to the L-glutamine binding site. Catalysis depends on C386, which acts as the Nucleophile; for glutamine hydrolysis. L-glutamine is bound by residues 387-390 (LGMQ), E410, and R464. Active-site residues include H509 and E511.

This sequence belongs to the CTP synthase family. As to quaternary structure, homotetramer.

It carries out the reaction UTP + L-glutamine + ATP + H2O = CTP + L-glutamate + ADP + phosphate + 2 H(+). The enzyme catalyses L-glutamine + H2O = L-glutamate + NH4(+). The catalysed reaction is UTP + NH4(+) + ATP = CTP + ADP + phosphate + 2 H(+). It functions in the pathway pyrimidine metabolism; CTP biosynthesis via de novo pathway; CTP from UDP: step 2/2. Allosterically activated by GTP, when glutamine is the substrate; GTP has no effect on the reaction when ammonia is the substrate. The allosteric effector GTP functions by stabilizing the protein conformation that binds the tetrahedral intermediate(s) formed during glutamine hydrolysis. Inhibited by the product CTP, via allosteric rather than competitive inhibition. Its function is as follows. Catalyzes the ATP-dependent amination of UTP to CTP with either L-glutamine or ammonia as the source of nitrogen. Regulates intracellular CTP levels through interactions with the four ribonucleotide triphosphates. This Wolbachia sp. subsp. Brugia malayi (strain TRS) protein is CTP synthase.